Reading from the N-terminus, the 141-residue chain is Nucleoside diphosphate kinase (141 aa).

ATP contacts are provided by lysine 11, phenylalanine 59, arginine 87, threonine 93, arginine 104, and asparagine 114. Histidine 117 acts as the Pros-phosphohistidine intermediate in catalysis.

Belongs to the NDK family. In terms of assembly, homotetramer. Mg(2+) serves as cofactor.

It localises to the cytoplasm. It catalyses the reaction a 2'-deoxyribonucleoside 5'-diphosphate + ATP = a 2'-deoxyribonucleoside 5'-triphosphate + ADP. It carries out the reaction a ribonucleoside 5'-diphosphate + ATP = a ribonucleoside 5'-triphosphate + ADP. In terms of biological role, major role in the synthesis of nucleoside triphosphates other than ATP. The ATP gamma phosphate is transferred to the NDP beta phosphate via a ping-pong mechanism, using a phosphorylated active-site intermediate. The protein is Nucleoside diphosphate kinase of Burkholderia multivorans (strain ATCC 17616 / 249).